The sequence spans 371 residues: O-antigen chain mannosyltransferase C (371 aa).

The protein belongs to the glycosyltransferase group 1 family. Glycosyltransferase 4 subfamily.

It carries out the reaction N-acetyl-alpha-D-glucosaminyl-di-trans,octa-cis-undecaprenyl diphosphate + GDP-alpha-D-mannose = alpha-D-mannosyl-(1-&gt;3)-N-acetyl-alpha-D-glucosaminyl-di-trans,octa-cis-undecaprenyl diphosphate + GDP + H(+). It functions in the pathway bacterial outer membrane biogenesis; LPS O-antigen biosynthesis. In terms of biological role, mannosyltransferase involved in the biosynthesis of the repeat unit of the lipopolysaccharide (LPS) O-antigen region. Catalyzes the transfer of a single alpha-(1-&gt;3)-linked mannose residue to the acceptor N-acetyl-glucosaminyl-diphospho-undecaprenol during the synthesis of the adapter region. The polypeptide is O-antigen chain mannosyltransferase C (Escherichia coli).